The chain runs to 448 residues: Velvet complex subunit 2 (448 aa).

2 disordered regions span residues 1–153 (MNSA…SKIE) and 224–306 (EPGT…NGYG). Over residues 15–34 (PGPAYSSSAPPPIHTYQQHQ) the composition is skewed to low complexity. 2 stretches are compositionally biased toward pro residues: residues 35–44 (HPPPPLPPPS) and 52–61 (PPLPPPPSAP). The span at 96-107 (APYQQSQPSQYP) shows a compositional bias: low complexity. The segment covering 116 to 132 (VPPPSQHDEPPPPPSSG) has biased composition (pro residues). A Velvet domain is found at 155 to 431 (GSGWKYSLDV…ANQGIKIPIR (277 aa)). The span at 260-292 (QQSYGPAPSYPPSSSYGPPQQYYPRHSGYSAEP) shows a compositional bias: low complexity.

This sequence belongs to the velvet family. VelB subfamily. Component of the heterotrimeric velvet complex composed of LAE1, VE1 and VELB; VE1 acting as a bridging protein between LAE1 and VEL2. Interacts with VE1. Forms a heterodimeric complex with VOS1; the formation of the VELB-VOS1 complex is light-dependent.

The protein localises to the nucleus. It localises to the cytoplasm. Functionally, component of the velvet transcription factor complex that controls sexual/asexual developmental ratio in response to light, promoting sexual development in the darkness while stimulating asexual sporulation under illumination. The velvet complex acts as a global regulator for secondary metabolite gene expression. Component of the VELB-VOS1 heterodimeric complex that plays a dual role in activating genes associated with spore maturation and repressing certain development-associated genes. The VELB-VOS1 complex binds DNA through the DNA-binding domain of VOS1 that recognizes an 11-nucleotide consensus sequence 5'-CTGGCCGCGGC-3' consisting of two motifs in the promoters of key developmental regulatory genes. Controls the expression of the fumonisins gene cluster. Involved in cell wall integrity, cell surface hydrophobicity, hyphal polarity and conidiation pattern. Involved in oxidative stress resistance by positively regulating the transcription of the catalase-encoding gene CAT2. This chain is Velvet complex subunit 2, found in Gibberella moniliformis (strain M3125 / FGSC 7600) (Maize ear and stalk rot fungus).